Reading from the N-terminus, the 211-residue chain is tRNA (guanine-N(7)-)-methyltransferase (211 aa).

S-adenosyl-L-methionine contacts are provided by D40, E65, N92, and D117. Residue D117 is part of the active site. K121 is a substrate binding site. The interval 123-128 is interaction with RNA; the sequence is RHNKRR. D153 is a binding site for substrate.

Belongs to the class I-like SAM-binding methyltransferase superfamily. TrmB family.

The enzyme catalyses guanosine(46) in tRNA + S-adenosyl-L-methionine = N(7)-methylguanosine(46) in tRNA + S-adenosyl-L-homocysteine. It functions in the pathway tRNA modification; N(7)-methylguanine-tRNA biosynthesis. Catalyzes the formation of N(7)-methylguanine at position 46 (m7G46) in tRNA. In Synechocystis sp. (strain ATCC 27184 / PCC 6803 / Kazusa), this protein is tRNA (guanine-N(7)-)-methyltransferase.